The chain runs to 171 residues: UPF0398 protein STER_0279 (171 aa).

The protein belongs to the UPF0398 family.

This chain is UPF0398 protein STER_0279, found in Streptococcus thermophilus (strain ATCC BAA-491 / LMD-9).